Here is a 1036-residue protein sequence, read N- to C-terminus: Multiple C2 domain and transmembrane region protein 2 (1036 aa).

The region spanning 1–110 (MRNTTKLVVH…YKDDQVYQRF (110 aa)) is the C2 1 domain. 2 disordered regions span residues 137-204 (DQTF…PVQK) and 225-246 (RENP…HPQN). Polar residues predominate over residues 146–155 (PYTSPTQASA). The span at 158–168 (TEEDTADSETE) shows a compositional bias: acidic residues. The span at 190 to 204 (VEGKKSEEVKEPVQK) shows a compositional bias: basic and acidic residues. C2 domains follow at residues 277–399 (PNAG…PQWY), 440–563 (VHGE…SRWF), and 607–734 (YISD…THSF). Ca(2+) contacts are provided by D316, D364, E366, and D372. The next 2 helical transmembrane spans lie at 871–891 (FILV…MFFI) and 979–999 (LFIL…FKAI).

The protein belongs to the MCTP family. The cofactor is Ca(2+). Expressed in the vascular tissues of roots and rosette leaves. Accumulates in roots meristems. Observed in flowers.

It localises to the cell membrane. Functionally, may function as a signaling molecule by regulating the trafficking of other regulators. The polypeptide is Multiple C2 domain and transmembrane region protein 2 (Arabidopsis thaliana (Mouse-ear cress)).